The primary structure comprises 869 residues: Protein translocase subunit SecA (869 aa).

ATP contacts are provided by residues Gln85, 103-107 (GEGKT), and Asp508.

Belongs to the SecA family. As to quaternary structure, monomer and homodimer. Part of the essential Sec protein translocation apparatus which comprises SecA, SecYEG and auxiliary proteins SecDF. Other proteins may also be involved.

Its subcellular location is the cell membrane. It is found in the cytoplasm. It catalyses the reaction ATP + H2O + cellular proteinSide 1 = ADP + phosphate + cellular proteinSide 2.. Functionally, part of the Sec protein translocase complex. Interacts with the SecYEG preprotein conducting channel. Has a central role in coupling the hydrolysis of ATP to the transfer of proteins into and across the cell membrane, serving as an ATP-driven molecular motor driving the stepwise translocation of polypeptide chains across the membrane. The sequence is that of Protein translocase subunit SecA from Deinococcus deserti (strain DSM 17065 / CIP 109153 / LMG 22923 / VCD115).